The sequence spans 1493 residues: Mediator of RNA polymerase II transcription subunit 14 (1493 aa).

6 disordered regions span residues 1 to 51 (MPSS…YHAA), 71 to 110 (MIGV…SAKG), 408 to 427 (TEQG…APTV), 674 to 693 (QRPR…RSAS), 894 to 913 (EAGT…NDVD), and 957 to 997 (GSNT…SSDD). A compositionally biased stretch (basic and acidic residues) spans 90-100 (PDSKQSSDADG).

This sequence belongs to the Mediator complex subunit 14 family. As to quaternary structure, component of the Mediator complex.

Its subcellular location is the nucleus. Its function is as follows. Component of the Mediator complex, a coactivator involved in the regulated transcription of nearly all RNA polymerase II-dependent genes. Mediator functions as a bridge to convey information from gene-specific regulatory proteins to the basal RNA polymerase II transcription machinery. Mediator is recruited to promoters by direct interactions with regulatory proteins and serves as a scaffold for the assembly of a functional preinitiation complex with RNA polymerase II and the general transcription factors. The chain is Mediator of RNA polymerase II transcription subunit 14 (RGR1) from Mycosarcoma maydis (Corn smut fungus).